The primary structure comprises 129 residues: MNSATSLMCFALLLISPLCMGYTAEDREADSRRVAEIIKNSQDDNSKINSIQELLDIYKRLYPSLTPEERESIDNFVNEHTDEVLVDGVPSQGGRKTKFAKKILTEATKGVATGFFEELGSKLAGLFTG.

The first 21 residues, 1–21, serve as a signal peptide directing secretion; that stretch reads MNSATSLMCFALLLISPLCMG.

The protein belongs to the Turandot family.

The protein resides in the secreted. Functionally, a humoral factor that may play a role in stress tolerance. The sequence is that of Protein Turandot B1 (TotB1) from Drosophila erecta (Fruit fly).